We begin with the raw amino-acid sequence, 77 residues long: Protein AC43 (77 aa).

In terms of biological role, plays a role in the production of occlusion bodies as well as expression of the polyhedrin gene. In Autographa californica nuclear polyhedrosis virus (AcMNPV), this protein is Protein AC43.